Here is a 77-residue protein sequence, read N- to C-terminus: MPKADIHPQWYPEAKVYCNGEEVMTVGSTQPELHVDVWSGNHPFYTGTQKIIDTEGRVERFLRKYGMLEGDQAKSEA.

Belongs to the bacterial ribosomal protein bL31 family. Type A subfamily. Part of the 50S ribosomal subunit.

Its function is as follows. Binds the 23S rRNA. The protein is Large ribosomal subunit protein bL31 of Synechococcus elongatus (strain ATCC 33912 / PCC 7942 / FACHB-805) (Anacystis nidulans R2).